The primary structure comprises 182 residues: Putative pre-16S rRNA nuclease (182 aa).

This sequence belongs to the YqgF nuclease family.

The protein resides in the cytoplasm. Could be a nuclease involved in processing of the 5'-end of pre-16S rRNA. The protein is Putative pre-16S rRNA nuclease of Corynebacterium glutamicum (strain ATCC 13032 / DSM 20300 / JCM 1318 / BCRC 11384 / CCUG 27702 / LMG 3730 / NBRC 12168 / NCIMB 10025 / NRRL B-2784 / 534).